We begin with the raw amino-acid sequence, 1238 residues long: MMGVTTTLNEDTEPSIPPGFGPFATLPLWGIHNDAKPAVTHSTPVQALQSIRKDSEECQPSAAVSRSDTPCSTSGTQTCRKSLRNRPPIDYSRFEHISDEDSDVEIVEKDVSSTRRRQQLPKGVLRGCAECSDCQKVIAKWNPAGARRPVLDEAPVFYPTEEEFEDTLKYIESIRPMAEPYGICRIVPPSSWKPPCLLKDKSIWEGSKFSTRVQKVDKLQNRKSSKKGRRGGMMKRRKLAESEENSATAHTQTGMQQSPERFGFEPGPEFTLQTFQKYADDFSKQYFRKDTSMDSVPSVEDIEGEYWRIVEVPTEEIEVIYGADLETGTFGSGFPKLSPETKSDAEDKYAQSGWNLNNLPRLQGSVLSFEGGDISGVLVPWVYVGMCFSSFCWHVEDHHLYSLNYMHWGAPKLWYGVPGKDAVNLESAMRKHLPELFEEQPDLLHNLVTQFSPSLLKSEGVHVYRCVQHEGEFVLTFPRAYHAGFNCGFNCAEAVNVAPIDWLPIGHNAVELYREQARKITISHDKLLLGAAREAIRAQWDILFLKRNTADNMRWKSICGADSTIFKALKARIETELVQRKTLGVPAQSRKMDAEFDSIDRECALCYYDLHLSASGCPCCPEKYACLVHAKQLCSCDWDKRFFLFRYDVNELNILADALGGKLSAIHRWGVSDLGLSLSSCVKREKVQDSKTVRRLTDGPRRSYMSQASAVSLVSSSTSNEQKDEGNKIMKIASPQTNNVCPSVEQRKSENISPLKEPCVRNELSCTTNSDSNGLQYNGGLGGHKGSAPGLPVSSSPSFSSNVATRPISTSSVSMKIVQGLVASKSCIQASSRTGDSRSLLGEHHNRSPAMIHDGTNMKSSLESSNNSCRLIASDYNATPCHSSKDQVLVTPGTNASVVTLKDSSQVHSASSQQFVRTGPWTQSASHEASSPSTSALKPSLDPPAMKNLYGGFTQGSAHPGPPSFSNQQPNDGRLQRTSESLPGVEARARGHPTVTAQPALEIHSRNGGAQKGPRIANVVHRFKCSVEPLEIGVVLSGRLWSSSQAIFPKGFRSRVKYFSIVDPIQMAYYISEILDAGMQGPLFMVKLENCPGEVFINLSPTKCWNMVRERLNMEIRRQLNMGKSNLPTLQPPGSVDGLEMFGLLSPPIVQAIWARDRDHICTEYWRSRPHVLIEDPNNRHMLSQGPPLLALRGLIQRANRDELQVLRSLMTNSNNLDDSSRQQAAHIIEEEIAKQLC.

The segment at glutamate 56–cysteine 79 is disordered. A compositionally biased stretch (polar residues) spans alanine 62–cysteine 79. Residues alanine 154–proline 195 form the JmjN domain. Residues lysine 215–proline 266 form a disordered region. Residues asparagine 221–lysine 238 show a composition bias toward basic residues. Polar residues predominate over residues asparagine 245–proline 259. The JmjC domain maps to lysine 348–arginine 514. Residues histidine 394, glutamate 396, and histidine 482 each coordinate Fe cation. Disordered regions lie at residues glycine 699 to glutamate 725, tyrosine 777 to serine 798, threonine 834 to glutamate 863, and alanine 910 to threonine 978. Positions serine 706–serine 719 are enriched in low complexity. Over residues alanine 910–glutamine 923 the composition is skewed to polar residues. A compositionally biased stretch (low complexity) spans serine 924–alanine 936. A compositionally biased stretch (polar residues) spans serine 964–threonine 978. The FYR N-terminal domain maps to valine 1019–alanine 1077. The region spanning methionine 1079–arginine 1169 is the FYR C-terminal domain.

Fe(2+) serves as cofactor. Expressed in roots, leaf sheaths, stems and panicles.

It localises to the nucleus. The catalysed reaction is N(6),N(6),N(6)-trimethyl-L-lysyl(4)-[histone H3] + 3 2-oxoglutarate + 3 O2 = L-lysyl(4)-[histone H3] + 3 formaldehyde + 3 succinate + 3 CO2. Histone demethylase that demethylates 'Lys-4' (H3K4me) of histone H3 with a specific activity for H3K4me3, H3K4me2 and H3K4me1. No activity on H3K9me3/2/1, H3K27me3/2/1 and H3K36me3/2/1. Involved in the control of stem elongation by regulating methylation states of H3K4me3 on cytokinin oxidase (CKX) gene family, which may cause increased expression of CKX genes and reduced cytokinin levels. Prevents ectopic retrotransposition by regulating the levels of H3K4me3 in two non-LTR retrotransposons KARMA and LINE-1 (L1) and reinforcing their repressed states. In Oryza sativa subsp. japonica (Rice), this protein is Lysine-specific demethylase JMJ703 (JMJ703).